We begin with the raw amino-acid sequence, 517 residues long: MNVFSIFSLVFLAAFGSCADDRRSALEECFREADYEEFLEIARNGLKKTSNPKHVVVVGAGMAGLSAAYVLAGAGHRVTLLEASDRVGGRVNTYRDEKEGWYVNMGPMRLPERHRIVRTYIAKFGLKLNEFFQENENAWYFIRNIRKRVWEVKKDPGVFKYPVKPSEEGKSASQLYRESLKKVIEELKRTNCSYILDKYDTYSTKEYLIKEGNLSRGAVDMIGDLLNEDSSYYLSFIESLKNDDLFSYEKRFDEISDGFDQLPKSMHQAIAEMVHLNAQVIKIQRDAEKVRVAYQTPAKTLSYVTADYVIVCATSRAVRRISFEPPLPPKKAHALRSIHYKSATKIFLTCTRKFWEADGIHGGKSTTDLPSRFIYYPNHNFTSGVGVIVAYVLADDSDFFQALDIKTSADIVINDLSLIHQLPKNEIQALCYPSLIKKWSLDKYTMGALTSFTPYQFQDYIETVAAPVGRIYFAGEYTATVHGWLDSTIKSGLTAARNVNRASQKPSRIHLINDNQL.

Residues 1–19 form the signal peptide; the sequence is MNVFSIFSLVFLAAFGSCA. Cysteine 29 and cysteine 192 are oxidised to a cystine. FAD contacts are provided by residues 62–63, 82–83, arginine 90, and 106–109; these read MA, EA, and GPMR. Position 109 (arginine 109) interacts with substrate. An N-linked (GlcNAc...) asparagine glycan is attached at asparagine 191. An FAD-binding site is contributed by valine 280. Cysteines 350 and 431 form a disulfide. Asparagine 380 carries an N-linked (GlcNAc...) asparagine glycan. Residue tyrosine 391 coordinates substrate. Residues glutamate 476 and 483–488 contribute to the FAD site; that span reads GWLDST. 483-484 serves as a coordination point for substrate; it reads GW.

This sequence belongs to the flavin monoamine oxidase family. FIG1 subfamily. In terms of assembly, monomer. This is in contrast with most of its orthologs, that are non-covalently linked homodimers. FAD is required as a cofactor. In terms of processing, N-glycosylated. Expressed by the venom gland.

The protein localises to the secreted. It carries out the reaction an L-alpha-amino acid + O2 + H2O = a 2-oxocarboxylate + H2O2 + NH4(+). It catalyses the reaction L-leucine + O2 + H2O = 4-methyl-2-oxopentanoate + H2O2 + NH4(+). The enzyme catalyses L-phenylalanine + O2 + H2O = 3-phenylpyruvate + H2O2 + NH4(+). The catalysed reaction is L-tryptophan + O2 + H2O = indole-3-pyruvate + H2O2 + NH4(+). It carries out the reaction L-methionine + O2 + H2O = 4-methylsulfanyl-2-oxobutanoate + H2O2 + NH4(+). It catalyses the reaction L-isoleucine + O2 + H2O = (S)-3-methyl-2-oxopentanoate + H2O2 + NH4(+). The enzyme catalyses L-arginine + O2 + H2O = 5-guanidino-2-oxopentanoate + H2O2 + NH4(+). The catalysed reaction is L-aspartate + O2 + H2O = oxaloacetate + H2O2 + NH4(+). It carries out the reaction L-histidine + O2 + H2O = 3-(imidazol-5-yl)pyruvate + H2O2 + NH4(+). It catalyses the reaction L-asparagine + O2 + H2O = 2-oxosuccinamate + H2O2 + NH4(+). The enzyme catalyses L-tyrosine + O2 + H2O = 3-(4-hydroxyphenyl)pyruvate + H2O2 + NH4(+). The catalysed reaction is L-glutamine + O2 + H2O = 2-oxoglutaramate + H2O2 + NH4(+). It carries out the reaction L-alanine + O2 + H2O = pyruvate + H2O2 + NH4(+). It catalyses the reaction L-lysine + O2 + H2O = 6-amino-2-oxohexanoate + H2O2 + NH4(+). The enzyme catalyses L-glutamate + O2 + H2O = H2O2 + 2-oxoglutarate + NH4(+). Its function is as follows. Catalyzes an oxidative deamination of predominantly hydrophobic and aromatic L-amino acids, thus producing hydrogen peroxide that may contribute to the diverse toxic effects of this enzyme. Is highly active against L-Tyr, L-Asp, L-Phe, L-Glu, L-Trp, L-His, L-Gln, L-Ile, L-Met, L-Leu and moderately active against L-Lys, L-Arg, L-Ala and L-Asn. Exhibits diverse biological activities, such as edema, inflammatory cell infiltration, cytotoxicity and apoptosis, as well as induction of platelet aggregation. Effects of snake L-amino oxidases on platelets are controversial, since they either induce aggregation or inhibit agonist-induced aggregation. These different effects are probably due to different experimental conditions. This protein may also induce hemorrhage, hemolysis, and have antibacterial and antiparasitic activities. In Bungarus fasciatus (Banded krait), this protein is L-amino-acid oxidase.